Reading from the N-terminus, the 453-residue chain is Probable glycine dehydrogenase (decarboxylating) subunit 1 (453 aa).

It belongs to the GcvP family. N-terminal subunit subfamily. The glycine cleavage system is composed of four proteins: P, T, L and H. In this organism, the P 'protein' is a heterodimer of two subunits.

It catalyses the reaction N(6)-[(R)-lipoyl]-L-lysyl-[glycine-cleavage complex H protein] + glycine + H(+) = N(6)-[(R)-S(8)-aminomethyldihydrolipoyl]-L-lysyl-[glycine-cleavage complex H protein] + CO2. The glycine cleavage system catalyzes the degradation of glycine. The P protein binds the alpha-amino group of glycine through its pyridoxal phosphate cofactor; CO(2) is released and the remaining methylamine moiety is then transferred to the lipoamide cofactor of the H protein. This Nitrosomonas europaea (strain ATCC 19718 / CIP 103999 / KCTC 2705 / NBRC 14298) protein is Probable glycine dehydrogenase (decarboxylating) subunit 1.